The chain runs to 445 residues: Chromosomal replication initiator protein DnaA (445 aa).

Residues 1 to 69 (MEKIWLEAQS…IEAISSLTNI (69 aa)) form a domain I, interacts with DnaA modulators region. The interval 69–108 (IKYQVDFKITEKSQVEKKKVDLQATEKIENDSTRNVDFNT) is domain II. A domain III, AAA+ region region spans residues 109-325 (NLNPKYTFDS…GMLIRLGAYA (217 aa)). Positions 153, 155, 156, and 157 each coordinate ATP. The tract at residues 326–445 (SLTGSEISLN…VEKMKKELMS (120 aa)) is domain IV, binds dsDNA.

Belongs to the DnaA family. As to quaternary structure, oligomerizes as a right-handed, spiral filament on DNA at oriC.

Its subcellular location is the cytoplasm. Plays an essential role in the initiation and regulation of chromosomal replication. ATP-DnaA binds to the origin of replication (oriC) to initiate formation of the DNA replication initiation complex once per cell cycle. Binds the DnaA box (a 9 base pair repeat at the origin) and separates the double-stranded (ds)DNA. Forms a right-handed helical filament on oriC DNA; dsDNA binds to the exterior of the filament while single-stranded (ss)DNA is stabiized in the filament's interior. The ATP-DnaA-oriC complex binds and stabilizes one strand of the AT-rich DNA unwinding element (DUE), permitting loading of DNA polymerase. After initiation quickly degrades to an ADP-DnaA complex that is not apt for DNA replication. Binds acidic phospholipids. The sequence is that of Chromosomal replication initiator protein DnaA from Geotalea daltonii (strain DSM 22248 / JCM 15807 / FRC-32) (Geobacter daltonii).